The following is a 334-amino-acid chain: MTIRVGINGFGRIGRNFFRAVLERSDDLEVVAVNDLTDNKTLSTLLKFDSIMGRLGQEVEYDDDSITVGGKRIAVYAERDPKNLDWAAHNVDIVIESTGFFTDANAAKAHIEAGAKKVIISAPASNEDATFVYGVNHESYDPENHNVISGASCTTNCLAPMAKVLNDKFGIENGLMTTVHAYTGDQRLHDAPHRDLRRARAAAVNIVPTSTGAAKAVALVLPELKGKLDGYALRVPVITGSATDLTFNTKSEVTVESINAAIKEAAVGEFGETLAYSEEPLVSTDIVHDSHGSIFDAGLTKVSGNTVKVVSWYDNEWGYTCQLLRLTELVASKL.

Residues 12–13 (RI), Asp35, Arg79, and Ser121 contribute to the NAD(+) site. D-glyceraldehyde 3-phosphate contacts are provided by residues 152-154 (SCT), Thr183, Arg198, 211-212 (TG), and Arg234. Cys153 serves as the catalytic Nucleophile. Asn315 is a binding site for NAD(+).

This sequence belongs to the glyceraldehyde-3-phosphate dehydrogenase family. As to quaternary structure, homotetramer.

It localises to the cytoplasm. The catalysed reaction is D-glyceraldehyde 3-phosphate + phosphate + NAD(+) = (2R)-3-phospho-glyceroyl phosphate + NADH + H(+). The protein operates within carbohydrate degradation; glycolysis; pyruvate from D-glyceraldehyde 3-phosphate: step 1/5. Its function is as follows. Catalyzes the oxidative phosphorylation of glyceraldehyde 3-phosphate (G3P) to 1,3-bisphosphoglycerate (BPG) using the cofactor NAD. The first reaction step involves the formation of a hemiacetal intermediate between G3P and a cysteine residue, and this hemiacetal intermediate is then oxidized to a thioester, with concomitant reduction of NAD to NADH. The reduced NADH is then exchanged with the second NAD, and the thioester is attacked by a nucleophilic inorganic phosphate to produce BPG. This chain is Glyceraldehyde-3-phosphate dehydrogenase (gap), found in Corynebacterium glutamicum (strain ATCC 13032 / DSM 20300 / JCM 1318 / BCRC 11384 / CCUG 27702 / LMG 3730 / NBRC 12168 / NCIMB 10025 / NRRL B-2784 / 534).